Here is a 200-residue protein sequence, read N- to C-terminus: Cytochrome c biogenesis ATP-binding export protein CcmA (200 aa).

Residues 1 to 200 (MRLSGRGLRC…TREMRIGAAA (200 aa)) enclose the ABC transporter domain. 35-42 (GRNGAGKT) contributes to the ATP binding site.

Belongs to the ABC transporter superfamily. CcmA exporter (TC 3.A.1.107) family. In terms of assembly, the complex is composed of two ATP-binding proteins (CcmA) and two transmembrane proteins (CcmB).

It is found in the cell inner membrane. The enzyme catalyses heme b(in) + ATP + H2O = heme b(out) + ADP + phosphate + H(+). Functionally, part of the ABC transporter complex CcmAB involved in the biogenesis of c-type cytochromes; once thought to export heme, this seems not to be the case, but its exact role is uncertain. Responsible for energy coupling to the transport system. This is Cytochrome c biogenesis ATP-binding export protein CcmA from Rhodopseudomonas palustris (strain HaA2).